A 220-amino-acid chain; its full sequence is MGLFGKTQERPPKDLVNEWSLKIRKEMRVIDRQIRDIQREQEKVKRSIKESAKKGNREACVILAKEVVHSKKAVNKLYASKAHMNSVLMSMKNQLAVLRVSGSLQKSTEVMKAMQNLVKIPEIQATMRDLSKEMMKAGIIEEMLEDTFEGMEDQDEMEEQAEMEIDRILFEITAGALGKAPSKVTDALPEPEITGAMAASDEEEEEDLEAMQSRLAALRS.

A lipid anchor (N-myristoyl glycine) is attached at Gly2. Residues 22 to 54 (KIRKEMRVIDRQIRDIQREQEKVKRSIKESAKK) are a coiled coil. The important for autoinhibitory function stretch occupies residues 168 to 169 (IL). Positions 196–220 (AMAASDEEEEEDLEAMQSRLAALRS) are disordered. Residues 197–220 (MAASDEEEEEDLEAMQSRLAALRS) are a coiled coil. Positions 200 to 209 (SDEEEEEDLE) are enriched in acidic residues. The MIT-interacting motif signature appears at 201 to 209 (DEEEEEDLE). 2 interaction with STAMBP regions span residues 203–207 (EEEED) and 219–220 (RS).

This sequence belongs to the SNF7 family. As to quaternary structure, probable core component of the endosomal sorting required for transport complex III (ESCRT-III). ESCRT-III components are thought to multimerize to form a flat lattice on the perimeter membrane of the endosome. Several assembly forms of ESCRT-III may exist that interact and act sequentially.

It is found in the cytoplasm. The protein localises to the cytosol. It localises to the membrane. Its subcellular location is the endosome. The protein resides in the late endosome membrane. Functionally, probable core component of the endosomal sorting required for transport complex III (ESCRT-III) which is involved in multivesicular bodies (MVBs) formation and sorting of endosomal cargo proteins into MVBs. MVBs contain intraluminal vesicles (ILVs) that are generated by invagination and scission from the limiting membrane of the endosome and mostly are delivered to lysosomes enabling degradation of membrane proteins, such as stimulated growth factor receptors, lysosomal enzymes and lipids. Involved in late stages of cytokinesis. Plays a role in endosomal sorting/trafficking of EGF receptor. This is Charged multivesicular body protein 3 (chmp3) from Xenopus tropicalis (Western clawed frog).